Here is a 395-residue protein sequence, read N- to C-terminus: Chalcone synthase (395 aa).

The active site involves C169.

The protein belongs to the thiolase-like superfamily. Chalcone/stilbene synthases family.

The enzyme catalyses (E)-4-coumaroyl-CoA + 3 malonyl-CoA + 3 H(+) = 2',4,4',6'-tetrahydroxychalcone + 3 CO2 + 4 CoA. The protein operates within secondary metabolite biosynthesis; flavonoid biosynthesis. The primary product of this enzyme is 4,2',4',6'-tetrahydroxychalcone (also termed naringenin-chalcone or chalcone) which can under specific conditions spontaneously isomerize into naringenin. In Pinus strobus (Eastern white pine), this protein is Chalcone synthase (CHS).